The chain runs to 526 residues: Probable inorganic phosphate transporter 1-3 (526 aa).

The Cytoplasmic segment spans residues methionine 1 to histidine 21. A helical transmembrane segment spans residues phenylalanine 22–isoleucine 42. The Extracellular segment spans residues serine 43 to serine 70. A helical membrane pass occupies residues alanine 71–leucine 91. The Cytoplasmic segment spans residues glycine 92 to serine 99. A helical membrane pass occupies residues valine 100–glycine 120. The Extracellular portion of the chain corresponds to arginine 121 to lysine 124. A helical transmembrane segment spans residues glycine 125 to tyrosine 145. Over proline 146–alanine 163 the chain is Cytoplasmic. A helical membrane pass occupies residues phenylalanine 164–leucine 184. Residues valine 185–alanine 211 are Extracellular-facing. A helical transmembrane segment spans residues aspartate 212–tryptophan 232. Residues arginine 233–arginine 294 are Cytoplasmic-facing. A helical transmembrane segment spans residues histidine 295–serine 315. The Extracellular segment spans residues glutamine 316 to glutamine 349. Residues alanine 350–valine 370 form a helical membrane-spanning segment. At alanine 371–arginine 373 the chain is on the cytoplasmic side. Residues phenylalanine 374–proline 394 form a helical membrane-spanning segment. Over tyrosine 395 to phenylalanine 407 the chain is Extracellular. A helical membrane pass occupies residues valine 408 to isoleucine 428. Over valine 429 to glycine 444 the chain is Cytoplasmic. A helical transmembrane segment spans residues isoleucine 445–alanine 465. Topologically, residues glutamine 466–asparagine 483 are extracellular. The chain crosses the membrane as a helical span at residues alanine 484 to glutamate 504. The Cytoplasmic portion of the chain corresponds to serine 505–alanine 526.

This sequence belongs to the major facilitator superfamily. Phosphate:H(+) symporter (TC 2.A.1.9) family. In terms of tissue distribution, expressed at low levels in roots.

The protein localises to the membrane. Functionally, high-affinity transporter for external inorganic phosphate. The chain is Probable inorganic phosphate transporter 1-3 (PHT1-3) from Oryza sativa subsp. japonica (Rice).